A 324-amino-acid chain; its full sequence is tRNA (cytidine(32)/guanosine(34)-2'-O)-methyltransferase (324 aa).

S-adenosyl-L-methionine is bound by residues G53, W55, D75, D91, and D116. K156 serves as the catalytic Proton acceptor. A required for binding to WDR6 region spans residues D221–D240.

This sequence belongs to the class I-like SAM-binding methyltransferase superfamily. RNA methyltransferase RlmE family. TRM7 subfamily. As to quaternary structure, interacts with WDR6; the interaction is direct, and required for 2'-O-methylation of position 34 in substrate tRNAs.

It localises to the cytoplasm. Its subcellular location is the nucleus. The catalysed reaction is cytidine(32)/guanosine(34) in tRNA + 2 S-adenosyl-L-methionine = 2'-O-methylcytidine(32)/2'-O-methylguanosine(34) in tRNA + 2 S-adenosyl-L-homocysteine + 2 H(+). Methylates the 2'-O-ribose of nucleotides at positions 32 and 34 of the tRNA anticodon loop of substrate tRNAs. Requisite for faithful cytoplasmic translation. Requires THADA for methylation of the cytidine at position 32 of the anticodon loop of substrate tRNAs. Requires WDR6 for methylation of the nucleotide at position 34 of the anticodon loop of substrate tRNAs. Promotes translation efficiency of the UUU codon. Plays a role in neurogenesis. Required for expression of genes involved in neurogenesis and mitochondrial translation and energy generation. Requisite for RNA-mediated gene silencing. May modify position 32 in tRNA(Arg(ACG)), tRNA(Gln(CUG)), tRNA(Leu(UAA)), tRNA(Leu(UAG)), tRNA(Leu(AAG)), tRNA(Leu(CAG)), tRNA(Phe(GAA)), tRNA(Trp(CCA)) and tRNA(Val(AAC)), and position 34 in tRNA(Phe(GAA)), tRNA(Leu(CAA)), tRNA(Leu(UAA)), tRNA(Sec(UCA)), and tRNA(Trp(CCA)). This is tRNA (cytidine(32)/guanosine(34)-2'-O)-methyltransferase from Mus musculus (Mouse).